The chain runs to 192 residues: ATP synthase subunit b 2 (192 aa).

Residues 39-59 (SGFLAQLIWLALAFGLLYYLM) form a helical membrane-spanning segment.

Belongs to the ATPase B chain family. In terms of assembly, F-type ATPases have 2 components, F(1) - the catalytic core - and F(0) - the membrane proton channel. F(1) has five subunits: alpha(3), beta(3), gamma(1), delta(1), epsilon(1). F(0) has three main subunits: a(1), b(2) and c(10-14). The alpha and beta chains form an alternating ring which encloses part of the gamma chain. F(1) is attached to F(0) by a central stalk formed by the gamma and epsilon chains, while a peripheral stalk is formed by the delta and b chains.

The protein localises to the cell inner membrane. In terms of biological role, f(1)F(0) ATP synthase produces ATP from ADP in the presence of a proton or sodium gradient. F-type ATPases consist of two structural domains, F(1) containing the extramembraneous catalytic core and F(0) containing the membrane proton channel, linked together by a central stalk and a peripheral stalk. During catalysis, ATP synthesis in the catalytic domain of F(1) is coupled via a rotary mechanism of the central stalk subunits to proton translocation. Component of the F(0) channel, it forms part of the peripheral stalk, linking F(1) to F(0). The b'-subunit is a diverged and duplicated form of b found in plants and photosynthetic bacteria. The sequence is that of ATP synthase subunit b 2 (atpF2) from Methylobacterium radiotolerans (strain ATCC 27329 / DSM 1819 / JCM 2831 / NBRC 15690 / NCIMB 10815 / 0-1).